The chain runs to 57 residues: UPF0391 membrane protein RPE_2138 (57 aa).

Helical transmembrane passes span 4 to 24 (WVVT…GGIA) and 30 to 50 (IAKI…VIGL).

Belongs to the UPF0391 family.

The protein resides in the cell membrane. The chain is UPF0391 membrane protein RPE_2138 from Rhodopseudomonas palustris (strain BisA53).